A 167-amino-acid polypeptide reads, in one-letter code: MAKMLRVGKITNTHGIKGDLKVLPLTDYFERFEELEWVYIEGFKDKFYIENIKYKPTLVILSFEGYGDINLVEKFKDRYLLIDESQRRILPEDTYYIADIIGLDVFTVKDEYIGKVVDIIQTGSSEVYVIRMNNLKEIMIPSVKEFMPEISLEKKRITIDPIEGMIE.

The region spanning Glu92 to Met165 is the PRC barrel domain.

The protein belongs to the RimM family. As to quaternary structure, binds ribosomal protein uS19.

It is found in the cytoplasm. Its function is as follows. An accessory protein needed during the final step in the assembly of 30S ribosomal subunit, possibly for assembly of the head region. Essential for efficient processing of 16S rRNA. May be needed both before and after RbfA during the maturation of 16S rRNA. It has affinity for free ribosomal 30S subunits but not for 70S ribosomes. The protein is Ribosome maturation factor RimM of Alkaliphilus oremlandii (strain OhILAs) (Clostridium oremlandii (strain OhILAs)).